Consider the following 561-residue polypeptide: Arginine--tRNA ligase (561 aa).

The 'HIGH' region motif lies at 129–139; that stretch reads ANPTGPLHIGH.

Belongs to the class-I aminoacyl-tRNA synthetase family. In terms of assembly, monomer.

The protein localises to the cytoplasm. The enzyme catalyses tRNA(Arg) + L-arginine + ATP = L-arginyl-tRNA(Arg) + AMP + diphosphate. The protein is Arginine--tRNA ligase of Geotalea uraniireducens (strain Rf4) (Geobacter uraniireducens).